Here is an 878-residue protein sequence, read N- to C-terminus: Glycogen [starch] synthase (878 aa).

Residue lysine 61 participates in UDP-alpha-D-glucose binding. Disordered regions lie at residues 637–721 (PPKP…NVIP) and 746–878 (NEFK…KSLK). 2 stretches are compositionally biased toward low complexity: residues 641–656 (ISRSPSPSPSSSLKLS) and 666–676 (QQQQQQQQPQP). Residues 677–692 (IGTTINLIPPSSNVSV) show a composition bias toward polar residues. Low complexity-rich tracts occupy residues 693 to 715 (TPTTTPTTTTTATTATTAPITTP), 746 to 781 (NEFKKQQQQQQQSKTPTTPTTTSTTTTTPSTTAAAT), 795 to 830 (PNTSSFIPTNKGSTATTTTTTATPTPTPSNNTNGKP), and 838 to 878 (TKSN…KSLK).

It belongs to the glycosyltransferase 3 family.

It carries out the reaction [(1-&gt;4)-alpha-D-glucosyl](n) + UDP-alpha-D-glucose = [(1-&gt;4)-alpha-D-glucosyl](n+1) + UDP + H(+). The protein operates within glycan biosynthesis; glycogen biosynthesis. Catalyzes the formation of apha-1,4 glycosidic bonds adding glucose residue from UDPG to the growing chain of glycogen. The polypeptide is Glycogen [starch] synthase (glcS) (Dictyostelium discoideum (Social amoeba)).